The sequence spans 119 residues: Large ribosomal subunit protein uL18 (119 aa).

It belongs to the universal ribosomal protein uL18 family. In terms of assembly, part of the 50S ribosomal subunit; part of the 5S rRNA/L5/L18/L25 subcomplex. Contacts the 5S and 23S rRNAs.

Its function is as follows. This is one of the proteins that bind and probably mediate the attachment of the 5S RNA into the large ribosomal subunit, where it forms part of the central protuberance. In Chlorobium phaeovibrioides (strain DSM 265 / 1930) (Prosthecochloris vibrioformis (strain DSM 265)), this protein is Large ribosomal subunit protein uL18.